The chain runs to 264 residues: Rano class II histocompatibility antigen, D-1 beta chain (264 aa).

Residues 1 to 26 (MVWLARDSCVAAVILLLTVLSPPVAL) form the signal peptide. Residues 27-120 (VRDPTPRFLE…EISESFLVPR (94 aa)) are beta-1. Over 27–226 (VRDPTPRFLE…AQSTSAQNKK (200 aa)) the chain is Extracellular. 2 cysteine pairs are disulfide-bonded: Cys42/Cys106 and Cys144/Cys200. Residue Asn46 is glycosylated (N-linked (GlcNAc...) asparagine). Residues 121–215 (TVEPKVTVYP…SLPSPVRVEW (95 aa)) are beta-2. One can recognise an Ig-like C1-type domain in the interval 124–228 (PKVTVYPSKT…STSAQNKKMS (105 aa)). Positions 216–226 (KAQSTSAQNKK) are connecting peptide. Residues 227-248 (MSGVGGIVLGLLFLGAGLFVYF) form a helical membrane-spanning segment. At 249-264 (RNQKGQSGLQPTGLLN) the chain is on the cytoplasmic side.

The protein belongs to the MHC class II family.

The protein resides in the membrane. Its function is as follows. Involved in the presentation of foreign antigens to the immune system. This chain is Rano class II histocompatibility antigen, D-1 beta chain (RT1-Db1), found in Rattus norvegicus (Rat).